Here is a 512-residue protein sequence, read N- to C-terminus: 2-isopropylmalate synthase (512 aa).

Residues 5-267 enclose the Pyruvate carboxyltransferase domain; the sequence is VVIFDTTLRD…ETSINKSEIY (263 aa). Mn(2+)-binding residues include Asp-14, His-202, His-204, and Asn-238. Residues 391-512 are regulatory domain; the sequence is SLEYLHITSG…LPKAKTERAV (122 aa).

The protein belongs to the alpha-IPM synthase/homocitrate synthase family. LeuA type 1 subfamily. As to quaternary structure, homodimer. The cofactor is Mn(2+).

It is found in the cytoplasm. It catalyses the reaction 3-methyl-2-oxobutanoate + acetyl-CoA + H2O = (2S)-2-isopropylmalate + CoA + H(+). It functions in the pathway amino-acid biosynthesis; L-leucine biosynthesis; L-leucine from 3-methyl-2-oxobutanoate: step 1/4. Its function is as follows. Catalyzes the condensation of the acetyl group of acetyl-CoA with 3-methyl-2-oxobutanoate (2-ketoisovalerate) to form 3-carboxy-3-hydroxy-4-methylpentanoate (2-isopropylmalate). In Heliobacterium modesticaldum (strain ATCC 51547 / Ice1), this protein is 2-isopropylmalate synthase.